Here is a 157-residue protein sequence, read N- to C-terminus: Fimbrial protein Q (157 aa).

A propeptide spanning residues 1–6 (MNAQKG) is cleaved from the precursor. F7 bears the N-methylphenylalanine mark. Cysteines 136 and 155 form a disulfide.

It belongs to the N-Me-Phe pilin family. In terms of assembly, the pili are polar flexible filaments of about 5.4 nanometers diameter and 2.5 micrometers average length; they consist of only a single polypeptide chain arranged in a helical configuration of five subunits per turn in the assembled pilus.

It localises to the fimbrium. This is Fimbrial protein Q (tfpQ) from Moraxella bovis.